Here is an 88-residue protein sequence, read N- to C-terminus: Cell division topological specificity factor (88 aa).

Belongs to the MinE family.

Its function is as follows. Prevents the cell division inhibition by proteins MinC and MinD at internal division sites while permitting inhibition at polar sites. This ensures cell division at the proper site by restricting the formation of a division septum at the midpoint of the long axis of the cell. The protein is Cell division topological specificity factor of Citrobacter koseri (strain ATCC BAA-895 / CDC 4225-83 / SGSC4696).